The following is a 278-amino-acid chain: Indole-3-glycerol phosphate synthase (278 aa).

The protein belongs to the TrpC family.

The enzyme catalyses 1-(2-carboxyphenylamino)-1-deoxy-D-ribulose 5-phosphate + H(+) = (1S,2R)-1-C-(indol-3-yl)glycerol 3-phosphate + CO2 + H2O. The protein operates within amino-acid biosynthesis; L-tryptophan biosynthesis; L-tryptophan from chorismate: step 4/5. The polypeptide is Indole-3-glycerol phosphate synthase (Stutzerimonas stutzeri (strain A1501) (Pseudomonas stutzeri)).